The following is a 329-amino-acid chain: Transcription factor TGA2.3 (329 aa).

The disordered stretch occupies residues 1 to 48 (MADMSPRTDTSTDDTDDNHMLEPGQLALAAASDSDRSKDKHEDQKTLR). Positions 33–46 (DSDRSKDKHEDQKT) are enriched in basic and acidic residues. In terms of domain architecture, bZIP spans 43–87 (DQKTLRRLAQNREAARKSRLRKKAYVQQLENSRLKLTQLEQELQR). The interval 45–65 (KTLRRLAQNREAARKSRLRKK) is basic motif. Residues 71–85 (LENSRLKLTQLEQEL) form a leucine-zipper region. Positions 110-326 (ALAFDMEYAR…RALSSLWLAR (217 aa)) constitute a DOG1 domain.

The protein belongs to the bZIP family. Interacts with NPR1/NH1 and NPR3/NH3.

The protein resides in the nucleus. Functionally, transcriptional regulator involved in defense response. The sequence is that of Transcription factor TGA2.3 from Oryza sativa subsp. japonica (Rice).